A 523-amino-acid chain; its full sequence is WD repeat-containing protein YPL247C (523 aa).

The interval 1–64 (MDPFHNGNKR…TTNGGNSKRN (64 aa)) is disordered. Residues 9–40 (KRSSISFGSSQRQPYNKNNYLSGTNGPSSAAQ) are compositionally biased toward polar residues. Phosphoserine is present on Ser47. Residues 52–64 (SGNTTNGGNSKRN) show a composition bias toward low complexity. Ser65 carries the phosphoserine modification. 4 WD repeats span residues 173–213 (DVVY…RQFQ), 241–281 (GTFP…YVKT), 285–325 (AHDS…HSTI), and 392–432 (GHGS…MEIN). Residues 436-472 (SKSPSIHGTSLEDPDGDTEMTDGGAGSGLNEDPLSLN) are disordered.

It belongs to the WD repeat WDR68 family.

It is found in the cytoplasm. Its subcellular location is the nucleus. The polypeptide is WD repeat-containing protein YPL247C (Saccharomyces cerevisiae (strain ATCC 204508 / S288c) (Baker's yeast)).